A 133-amino-acid polypeptide reads, in one-letter code: Large ribosomal subunit protein bL20 (133 aa).

This sequence belongs to the bacterial ribosomal protein bL20 family.

Its function is as follows. Binds directly to 23S ribosomal RNA and is necessary for the in vitro assembly process of the 50S ribosomal subunit. It is not involved in the protein synthesizing functions of that subunit. The polypeptide is Large ribosomal subunit protein bL20 (Chelativorans sp. (strain BNC1)).